The chain runs to 504 residues: Splicing factor SF3a60 homolog (504 aa).

An N-acetylserine modification is found at Ser2. 2 disordered regions span residues 293 to 319 and 355 to 374; these read DKKHFARPPHNGKQNGDAKSTHESENA and YEEMEGEREGEEANTELESD. Acidic residues predominate over residues 356-374; that stretch reads EEMEGEREGEEANTELESD. A Phosphoserine modification is found at Ser373. The Matrin-type zinc-finger motif lies at 409-440; that stretch reads FKCEICGNYSYWGRRAFERHFKEWRHQHGMRC.

It belongs to the SF3A3 family. As to expression, expressed at moderate levels in all sporophytic tissues with strongest expression in gametophytes.

It is found in the nucleus. In terms of biological role, splicing factor homolog to SF3a60 that may be involved in pre-spliceosome formation. Is necessary for gametic cell fate determination. The sequence is that of Splicing factor SF3a60 homolog from Arabidopsis thaliana (Mouse-ear cress).